Reading from the N-terminus, the 453-residue chain is UPF0210 protein MM_0081 (453 aa).

Belongs to the UPF0210 family.

The protein is UPF0210 protein MM_0081 of Methanosarcina mazei (strain ATCC BAA-159 / DSM 3647 / Goe1 / Go1 / JCM 11833 / OCM 88) (Methanosarcina frisia).